The chain runs to 304 residues: UPF0282 protein TSIB_1029 (304 aa).

It belongs to the UPF0282 family.

This chain is UPF0282 protein TSIB_1029, found in Thermococcus sibiricus (strain DSM 12597 / MM 739).